We begin with the raw amino-acid sequence, 63 residues long: Beta-defensin 3 (63 aa).

An N-terminal signal peptide occupies residues 1 to 20; that stretch reads MRIHYLLFAFLLVLLSPPAA. The propeptide occupies 21–22; that stretch reads FS. Cystine bridges form between Cys31/Cys59, Cys38/Cys52, and Cys42/Cys60.

This sequence belongs to the beta-defensin family. LAP/TAP subfamily. As to expression, highest expression in salivary glands, epididymis, ovary and pancreas and to a lesser extent in lung, liver and brain. Low or no expression in skeletal muscle and tongue.

It is found in the secreted. Its function is as follows. Antimicrobial activity against Gram-negative bacteria E.coli and P.aeruginosa. In Mus musculus (Mouse), this protein is Beta-defensin 3 (Defb3).